A 308-amino-acid chain; its full sequence is NADH-cytochrome b5 reductase 1 (308 aa).

The helical transmembrane segment at 10 to 27 (INGVYIPSALLIFGTTII) threads the bilayer. The region spanning 59–164 (TEFQNFVLKD…RGPKGAMVYT (106 aa)) is the FAD-binding FR-type domain. Residues 144–159 (TTLRIGDKMKVRGPKG) and 170–207 (HIGMIAGGTGITPMLQVIKAIIKGRPRNGGNDTTQIDL) each bind FAD.

Belongs to the flavoprotein pyridine nucleotide cytochrome reductase family. As to quaternary structure, monomer. Component of the 2-(3-amino-3-carboxypropyl)histidine synthase complex composed of DPH1, DPH2, DPH3 and a NADH-dependent reductase, predominantly CBR1. It depends on FAD as a cofactor.

The protein localises to the mitochondrion outer membrane. It catalyses the reaction 2 Fe(III)-[cytochrome b5] + NADH = 2 Fe(II)-[cytochrome b5] + NAD(+) + H(+). The catalysed reaction is 2 Fe(3+)-[Dph3] + NADH = 2 Fe(2+)-[Dph3] + NAD(+) + H(+). Its pathway is protein modification; peptidyl-diphthamide biosynthesis. Its function is as follows. NADH-dependent reductase for DPH3 and cytochrome b5. Required for the first step of diphthamide biosynthesis, a post-translational modification of histidine which occurs in elongation factor 2. DPH1 and DPH2 transfer a 3-amino-3-carboxypropyl (ACP) group from S-adenosyl-L-methionine (SAM) to a histidine residue, the reaction is assisted by a reduction system comprising DPH3 and a NADH-dependent reductase, predominantly CBR1. By reducing DPH3, also involved in the formation of the tRNA wobble base modification mcm5s 2U (5-methoxycarbonylmethyl-2-thiouridine), mediated by the elongator complex. The cytochrome b5/NADH cytochrome b5 reductase electron transfer system supports the catalytic activity of several sterol biosynthetic enzymes. This chain is NADH-cytochrome b5 reductase 1 (CBR1), found in Coccidioides immitis (strain RS) (Valley fever fungus).